The sequence spans 92 residues: MARSVWKGPFVDAYVLRKAEKARESGKSDVIKIWSRRSTILPQFVGLTFGVYNGQKHIPVSVTEEMIGQKFGEYSPTRTYYGHAADKKAKRK.

This sequence belongs to the universal ribosomal protein uS19 family.

Its function is as follows. Protein S19 forms a complex with S13 that binds strongly to the 16S ribosomal RNA. The chain is Small ribosomal subunit protein uS19 from Paracoccus denitrificans (strain Pd 1222).